Consider the following 152-residue polypeptide: Protein X (152 aa).

Residues 68–115 (PCALRFTSATWRCMETPMNSVTCLRKRTLGLRTAPPTVMEQYIKDCLF) form a mitochondrial targeting sequence region.

It belongs to the orthohepadnavirus protein X family. May form homodimer. May interact with host CEBPA, CFLAR, CREB1, DDB1, E4F1, HBXIP, HSPD1/HSP60, NFKBIA, POLR2E and SMAD4. Interacts with host SMC5-SMC6 complex and induces its degradation. Interacts with host TRPC4AP; leading to prevent ubiquitination of TRPC4AP. Interacts with host PLSCR1; this interaction promotes ubiquitination and degradation of HBx and impairs HBx-mediated cell proliferation. Post-translationally, a fraction may be phosphorylated in insect cells and HepG2 cells, a human hepatoblastoma cell line. Phosphorylated in vitro by host protein kinase C or mitogen-activated protein kinase. N-acetylated in insect cells.

It is found in the host cytoplasm. The protein localises to the host nucleus. Its subcellular location is the host mitochondrion. In terms of biological role, multifunctional protein that plays a role in silencing host antiviral defenses and promoting viral transcription. Does not seem to be essential for HBV infection. May be directly involved in development of cirrhosis and liver cancer (hepatocellular carcinoma). Most of cytosolic activities involve modulation of cytosolic calcium. The effect on apoptosis is controversial depending on the cell types in which the studies have been conducted. May induce apoptosis by localizing in mitochondria and causing loss of mitochondrial membrane potential. May also modulate apoptosis by binding host CFLAR, a key regulator of the death-inducing signaling complex (DISC). Promotes viral transcription by using the host E3 ubiquitin ligase DDB1 to target the SMC5-SMC6 complex to proteasomal degradation. This host complex would otherwise bind to viral episomal DNA, and prevents its transcription. Moderately stimulates transcription of many different viral and cellular transcription elements. Promoters and enhancers stimulated by HBx contain DNA binding sites for NF-kappa-B, AP-1, AP-2, c-EBP, ATF/CREB, or the calcium-activated factor NF-AT. This is Protein X from Lagothrix lagotricha (Brown woolly monkey).